The primary structure comprises 39 residues: Photosystem II reaction center protein J (39 aa).

A helical transmembrane segment spans residues Leu9–Phe29.

Belongs to the PsbJ family. In terms of assembly, PSII is composed of 1 copy each of membrane proteins PsbA, PsbB, PsbC, PsbD, PsbE, PsbF, PsbH, PsbI, PsbJ, PsbK, PsbL, PsbM, PsbT, PsbX, PsbY, PsbZ, Psb30/Ycf12, at least 3 peripheral proteins of the oxygen-evolving complex and a large number of cofactors. It forms dimeric complexes.

It localises to the plastid. The protein resides in the chloroplast thylakoid membrane. One of the components of the core complex of photosystem II (PSII). PSII is a light-driven water:plastoquinone oxidoreductase that uses light energy to abstract electrons from H(2)O, generating O(2) and a proton gradient subsequently used for ATP formation. It consists of a core antenna complex that captures photons, and an electron transfer chain that converts photonic excitation into a charge separation. In Emiliania huxleyi (Coccolithophore), this protein is Photosystem II reaction center protein J.